A 348-amino-acid chain; its full sequence is Erythronate-4-phosphate dehydrogenase (348 aa).

Substrate-binding residues include Thr46 and Thr67. Residue Asp147 coordinates NAD(+). The active site involves Arg209. Asp233 is a binding site for NAD(+). Residue Glu238 is part of the active site. Catalysis depends on His255, which acts as the Proton donor. Gly258 is an NAD(+) binding site. Tyr259 lines the substrate pocket.

Belongs to the D-isomer specific 2-hydroxyacid dehydrogenase family. PdxB subfamily. Homodimer.

The protein resides in the cytoplasm. The enzyme catalyses 4-phospho-D-erythronate + NAD(+) = (R)-3-hydroxy-2-oxo-4-phosphooxybutanoate + NADH + H(+). The protein operates within cofactor biosynthesis; pyridoxine 5'-phosphate biosynthesis; pyridoxine 5'-phosphate from D-erythrose 4-phosphate: step 2/5. Functionally, catalyzes the oxidation of erythronate-4-phosphate to 3-hydroxy-2-oxo-4-phosphonooxybutanoate. This chain is Erythronate-4-phosphate dehydrogenase, found in Bacteroides thetaiotaomicron (strain ATCC 29148 / DSM 2079 / JCM 5827 / CCUG 10774 / NCTC 10582 / VPI-5482 / E50).